A 335-amino-acid polypeptide reads, in one-letter code: L-carnitine dehydrogenase (335 aa).

29-34 (GTGVIG) contacts NAD(+).

The protein belongs to the 3-hydroxyacyl-CoA dehydrogenase family. L-carnitine dehydrogenase subfamily. As to quaternary structure, homodimer.

Its subcellular location is the cytoplasm. It catalyses the reaction carnitine + NAD(+) = 3-dehydrocarnitine + NADH + H(+). It functions in the pathway amine and polyamine metabolism; carnitine metabolism. Functionally, catalyzes the NAD(+)-dependent oxidation of L-carnitine to 3-dehydrocarnitine. This is L-carnitine dehydrogenase from Streptomyces griseus subsp. griseus (strain JCM 4626 / CBS 651.72 / NBRC 13350 / KCC S-0626 / ISP 5235).